A 225-amino-acid polypeptide reads, in one-letter code: Large ribosomal subunit protein mL58 (225 aa).

Residues 106–138 (PQAPITTPESSSTDAAAADQHGDLPPVLYNPTK) are disordered. Positions 109–119 (PITTPESSSTD) are enriched in polar residues.

The protein belongs to the mitochondrion-specific ribosomal protein mL58 family. As to quaternary structure, component of the mitochondrial large ribosomal subunit (mt-LSU). Mature N.crassa 74S mitochondrial ribosomes consist of a small (37S) and a large (54S) subunit. The 37S small subunit contains a 16S ribosomal RNA (16S mt-rRNA) and 32 different proteins. The 54S large subunit contains a 23S rRNA (23S mt-rRNA) and 42 different proteins.

The protein localises to the mitochondrion. Component of the mitochondrial ribosome (mitoribosome), a dedicated translation machinery responsible for the synthesis of mitochondrial genome-encoded proteins, including at least some of the essential transmembrane subunits of the mitochondrial respiratory chain. The mitoribosomes are attached to the mitochondrial inner membrane and translation products are cotranslationally integrated into the membrane. The polypeptide is Large ribosomal subunit protein mL58 (mrpl20) (Neurospora crassa (strain ATCC 24698 / 74-OR23-1A / CBS 708.71 / DSM 1257 / FGSC 987)).